Reading from the N-terminus, the 561-residue chain is Excitatory amino acid transporter 4 (561 aa).

Residues 1 to 52 (MSSHGNSLFLRESGAGGGCLQGLQDSLQQRALRTRLRLQTMTREHVRRFLRR) are Cytoplasmic-facing. At Ser-2 the chain carries Phosphoserine. 3 helical membrane passes run 53 to 73 (NAFI…AFAL), 96 to 116 (MLQM…MASL), and 130 to 150 (VYYM…VTII). 3 N-linked (GlcNAc...) asparagine glycosylation sites follow: Asn-213, Asn-229, and Asn-236. The next 3 helical transmembrane spans lie at 259 to 282 (SANG…IGGM), 292 to 319 (FFDS…LFLI), and 341 to 362 (LTVI…YFLV). Residues 368 to 398 (FPFIGGMLQALITAMGTSSSSATLPITFRCL) constitute an intramembrane region (discontinuously helical). Residue 385–387 (SSS) participates in L-aspartate binding. Residues 408–434 (ITRFVLPVGATVNMDGTALYEALAAIF) traverse the membrane as a helical segment. Gly-416, Thr-418, and Asn-420 together coordinate Na(+). L-aspartate is bound by residues Thr-424, 465 to 469 (IPQAG), Asp-498, and Asn-505. An intramembrane region (discontinuously helical) is located at residues 448–481 (ITTISITATAASVGAAGIPQAGLVTMVIVLTSVG). Residues 495–516 (WFLDRLRTMTNVLGDSIGAAVI) traverse the membrane as a helical segment. Residues Asn-505 and Asp-509 each contribute to the Na(+) site.

This sequence belongs to the dicarboxylate/amino acid:cation symporter (DAACS) (TC 2.A.23) family. SLC1A6 subfamily. As to quaternary structure, homotrimer. Brain specific.

It localises to the cell membrane. The catalysed reaction is K(+)(in) + L-glutamate(out) + 3 Na(+)(out) + H(+)(out) = K(+)(out) + L-glutamate(in) + 3 Na(+)(in) + H(+)(in). It catalyses the reaction K(+)(in) + L-aspartate(out) + 3 Na(+)(out) + H(+)(out) = K(+)(out) + L-aspartate(in) + 3 Na(+)(in) + H(+)(in). The enzyme catalyses D-aspartate(out) + K(+)(in) + 3 Na(+)(out) + H(+)(out) = D-aspartate(in) + K(+)(out) + 3 Na(+)(in) + H(+)(in). In terms of biological role, sodium-dependent, high-affinity amino acid transporter that mediates the uptake of L-glutamate and also L-aspartate and D-aspartate. Functions as a symporter that transports one amino acid molecule together with two or three Na(+) ions and one proton, in parallel with the counter-transport of one K(+) ion. Mediates Cl(-) flux that is not coupled to amino acid transport; this avoids the accumulation of negative charges due to aspartate and Na(+) symport. Plays a redundant role in the rapid removal of released glutamate from the synaptic cleft, which is essential for terminating the postsynaptic action of glutamate. In Mus musculus (Mouse), this protein is Excitatory amino acid transporter 4 (Slc1a6).